The primary structure comprises 623 residues: tRNA uridine 5-carboxymethylaminomethyl modification enzyme MnmG (623 aa).

FAD-binding positions include glycine 11–glycine 16, valine 123, and serine 178. An NAD(+)-binding site is contributed by glycine 270 to phenylalanine 284. Glutamine 367 is a binding site for FAD.

It belongs to the MnmG family. Homodimer. Heterotetramer of two MnmE and two MnmG subunits. It depends on FAD as a cofactor.

The protein resides in the cytoplasm. In terms of biological role, NAD-binding protein involved in the addition of a carboxymethylaminomethyl (cmnm) group at the wobble position (U34) of certain tRNAs, forming tRNA-cmnm(5)s(2)U34. In Phocaeicola vulgatus (strain ATCC 8482 / DSM 1447 / JCM 5826 / CCUG 4940 / NBRC 14291 / NCTC 11154) (Bacteroides vulgatus), this protein is tRNA uridine 5-carboxymethylaminomethyl modification enzyme MnmG.